The sequence spans 55 residues: ATP synthase F(0) complex subunit 8 (55 aa).

A helical transmembrane segment spans residues 4–24 (LNPSPWFIILLFSWVIFMVIL).

The protein belongs to the ATPase protein 8 family. Component of the ATP synthase complex composed at least of ATP5F1A/subunit alpha, ATP5F1B/subunit beta, ATP5MC1/subunit c (homooctomer), MT-ATP6/subunit a, MT-ATP8/subunit 8, ATP5ME/subunit e, ATP5MF/subunit f, ATP5MG/subunit g, ATP5MK/subunit k, ATP5MJ/subunit j, ATP5F1C/subunit gamma, ATP5F1D/subunit delta, ATP5F1E/subunit epsilon, ATP5PF/subunit F6, ATP5PB/subunit b, ATP5PD/subunit d, ATP5PO/subunit OSCP. ATP synthase complex consists of a soluble F(1) head domain (subunits alpha(3) and beta(3)) - the catalytic core - and a membrane F(0) domain - the membrane proton channel (subunits c, a, 8, e, f, g, k and j). These two domains are linked by a central stalk (subunits gamma, delta, and epsilon) rotating inside the F1 region and a stationary peripheral stalk (subunits F6, b, d, and OSCP).

The protein resides in the mitochondrion membrane. Functionally, subunit 8, of the mitochondrial membrane ATP synthase complex (F(1)F(0) ATP synthase or Complex V) that produces ATP from ADP in the presence of a proton gradient across the membrane which is generated by electron transport complexes of the respiratory chain. ATP synthase complex consist of a soluble F(1) head domain - the catalytic core - and a membrane F(1) domain - the membrane proton channel. These two domains are linked by a central stalk rotating inside the F(1) region and a stationary peripheral stalk. During catalysis, ATP synthesis in the catalytic domain of F(1) is coupled via a rotary mechanism of the central stalk subunits to proton translocation. In vivo, can only synthesize ATP although its ATP hydrolase activity can be activated artificially in vitro. Part of the complex F(0) domain. In Scyliorhinus canicula (Small-spotted catshark), this protein is ATP synthase F(0) complex subunit 8.